A 341-amino-acid chain; its full sequence is General L-amino acid-binding periplasmic protein AapJ (341 aa).

The first 23 residues, 1–23 (MKNKLLSAAIGAAVLAVGASAAS), serve as a signal peptide directing secretion.

This sequence belongs to the bacterial solute-binding protein 3 family. The complex is composed of two ATP-binding proteins (AapP), two transmembrane proteins (AapM and AapQ) and a solute-binding protein (AapJ).

It is found in the periplasm. Its function is as follows. Part of the ABC transporter complex AapJQMP involved in uptake of L-amino acids. Affects the efflux of these amino acids as well. Essential for the development of bacteroids, the differentiated legume-symbiotic forms of this bacterium, and for the effective N(2) fixation by them. The chain is General L-amino acid-binding periplasmic protein AapJ (aapJ) from Rhizobium johnstonii (strain DSM 114642 / LMG 32736 / 3841) (Rhizobium leguminosarum bv. viciae).